We begin with the raw amino-acid sequence, 231 residues long: 2-C-methyl-D-erythritol 4-phosphate cytidylyltransferase (231 aa).

The protein belongs to the IspD/TarI cytidylyltransferase family. IspD subfamily.

It carries out the reaction 2-C-methyl-D-erythritol 4-phosphate + CTP + H(+) = 4-CDP-2-C-methyl-D-erythritol + diphosphate. It functions in the pathway isoprenoid biosynthesis; isopentenyl diphosphate biosynthesis via DXP pathway; isopentenyl diphosphate from 1-deoxy-D-xylulose 5-phosphate: step 2/6. In terms of biological role, catalyzes the formation of 4-diphosphocytidyl-2-C-methyl-D-erythritol from CTP and 2-C-methyl-D-erythritol 4-phosphate (MEP). This is 2-C-methyl-D-erythritol 4-phosphate cytidylyltransferase from Xylella fastidiosa (strain 9a5c).